We begin with the raw amino-acid sequence, 244 residues long: MILFPAIDLKDGQCVRLKLGDMEQATVYNPDPGAQAKAFEDQGFEWLHVVDLNGAFAGESVNGAAVDAILKATKNPVQLGGGIRSLAHIETWLQHGLSRVILGTVAVRDPALVIEACKLFPGKIAVGIDAKGGKVAVEGWAEASELGVVELAKKFEGAGVAAIIYTDIDRDGILTGINWESTLELADAVSIPVIASGGLASIEDIRRMLEPDARKLEGAISGRALYDGRIDPAEALALIQAAKG.

Residue D8 is the Proton acceptor of the active site. Catalysis depends on D129, which acts as the Proton donor.

Belongs to the HisA/HisF family.

It is found in the cytoplasm. The enzyme catalyses 1-(5-phospho-beta-D-ribosyl)-5-[(5-phospho-beta-D-ribosylamino)methylideneamino]imidazole-4-carboxamide = 5-[(5-phospho-1-deoxy-D-ribulos-1-ylimino)methylamino]-1-(5-phospho-beta-D-ribosyl)imidazole-4-carboxamide. The protein operates within amino-acid biosynthesis; L-histidine biosynthesis; L-histidine from 5-phospho-alpha-D-ribose 1-diphosphate: step 4/9. The protein is 1-(5-phosphoribosyl)-5-[(5-phosphoribosylamino)methylideneamino] imidazole-4-carboxamide isomerase of Allorhizobium ampelinum (strain ATCC BAA-846 / DSM 112012 / S4) (Agrobacterium vitis (strain S4)).